The primary structure comprises 734 residues: Photosystem I P700 chlorophyll a apoprotein A2 (734 aa).

The next 8 membrane-spanning stretches (helical) occupy residues Ile-46 to Ala-69, Leu-135 to Gln-158, Leu-175 to Ile-199, Met-273 to Tyr-291, Leu-330 to Tyr-353, Ala-369 to Ile-395, Ala-417 to His-439, and Phe-517 to Val-535. Cys-559 and Cys-568 together coordinate [4Fe-4S] cluster. The next 2 helical transmembrane spans lie at Ala-575–Trp-596 and Leu-643–Ile-665. 3 residues coordinate chlorophyll a: His-654, Met-662, and Tyr-670. Residue Trp-671 participates in phylloquinone binding. The helical transmembrane segment at Leu-707–Ala-727 threads the bilayer.

The protein belongs to the PsaA/PsaB family. The PsaA/B heterodimer binds the P700 chlorophyll special pair and subsequent electron acceptors. PSI consists of a core antenna complex that captures photons, and an electron transfer chain that converts photonic excitation into a charge separation. The eukaryotic PSI reaction center is composed of at least 11 subunits. Requires P700 is a chlorophyll a/chlorophyll a' dimer, A0 is one or more chlorophyll a, A1 is one or both phylloquinones and FX is a shared 4Fe-4S iron-sulfur center. as cofactor.

It is found in the plastid. Its subcellular location is the chloroplast thylakoid membrane. The enzyme catalyses reduced [plastocyanin] + hnu + oxidized [2Fe-2S]-[ferredoxin] = oxidized [plastocyanin] + reduced [2Fe-2S]-[ferredoxin]. Its function is as follows. PsaA and PsaB bind P700, the primary electron donor of photosystem I (PSI), as well as the electron acceptors A0, A1 and FX. PSI is a plastocyanin/cytochrome c6-ferredoxin oxidoreductase, converting photonic excitation into a charge separation, which transfers an electron from the donor P700 chlorophyll pair to the spectroscopically characterized acceptors A0, A1, FX, FA and FB in turn. Oxidized P700 is reduced on the lumenal side of the thylakoid membrane by plastocyanin or cytochrome c6. This chain is Photosystem I P700 chlorophyll a apoprotein A2, found in Gracilaria tenuistipitata var. liui (Red alga).